The primary structure comprises 113 residues: Translation initiation factor 1A (113 aa).

The 76-residue stretch at 12–87 folds into the S1-like domain; it reads EVIRVPLPEG…KRGDIVYRYT (76 aa).

The protein belongs to the eIF-1A family.

Its function is as follows. Seems to be required for maximal rate of protein biosynthesis. Enhances ribosome dissociation into subunits and stabilizes the binding of the initiator Met-tRNA(I) to 40 S ribosomal subunits. This chain is Translation initiation factor 1A (eIF1A), found in Pyrococcus abyssi (strain GE5 / Orsay).